The chain runs to 219 residues: Casein kinase II subunit beta' (219 aa).

Residue threonine 2 is modified to Phosphothreonine; by autocatalysis.

This sequence belongs to the casein kinase 2 subunit beta family. As to quaternary structure, tetramer of two alpha and two beta' subunits. Post-translationally, phosphorylated by alpha subunit.

Functionally, participates in Wnt signaling. Plays a complex role in regulating the basal catalytic activity of the alpha subunit. The chain is Casein kinase II subunit beta' (CkIIbeta2) from Drosophila melanogaster (Fruit fly).